We begin with the raw amino-acid sequence, 106 residues long: Small ribosomal subunit protein bS16 (106 aa).

It belongs to the bacterial ribosomal protein bS16 family.

The sequence is that of Small ribosomal subunit protein bS16 from Wolbachia pipientis wMel.